Here is a 185-residue protein sequence, read N- to C-terminus: Elongation factor P (185 aa).

Belongs to the elongation factor P family.

The protein localises to the cytoplasm. It functions in the pathway protein biosynthesis; polypeptide chain elongation. In terms of biological role, involved in peptide bond synthesis. Stimulates efficient translation and peptide-bond synthesis on native or reconstituted 70S ribosomes in vitro. Probably functions indirectly by altering the affinity of the ribosome for aminoacyl-tRNA, thus increasing their reactivity as acceptors for peptidyl transferase. This is Elongation factor P from Geobacillus thermodenitrificans (strain NG80-2).